Here is a 335-residue protein sequence, read N- to C-terminus: Phenylalanine--tRNA ligase alpha subunit (335 aa).

Glutamate 262 lines the Mg(2+) pocket.

Belongs to the class-II aminoacyl-tRNA synthetase family. Phe-tRNA synthetase alpha subunit type 1 subfamily. As to quaternary structure, tetramer of two alpha and two beta subunits. The cofactor is Mg(2+).

It localises to the cytoplasm. It catalyses the reaction tRNA(Phe) + L-phenylalanine + ATP = L-phenylalanyl-tRNA(Phe) + AMP + diphosphate + H(+). The sequence is that of Phenylalanine--tRNA ligase alpha subunit from Prochlorococcus marinus subsp. pastoris (strain CCMP1986 / NIES-2087 / MED4).